We begin with the raw amino-acid sequence, 469 residues long: 3-isopropylmalate dehydratase large subunit (469 aa).

Positions 349, 409, and 412 each coordinate [4Fe-4S] cluster. The disordered stretch occupies residues 424–443 (QISASSSNRNFKGRQGSPSG).

The protein belongs to the aconitase/IPM isomerase family. LeuC type 1 subfamily. As to quaternary structure, heterodimer of LeuC and LeuD. [4Fe-4S] cluster serves as cofactor.

The catalysed reaction is (2R,3S)-3-isopropylmalate = (2S)-2-isopropylmalate. Its pathway is amino-acid biosynthesis; L-leucine biosynthesis; L-leucine from 3-methyl-2-oxobutanoate: step 2/4. Its function is as follows. Catalyzes the isomerization between 2-isopropylmalate and 3-isopropylmalate, via the formation of 2-isopropylmaleate. The protein is 3-isopropylmalate dehydratase large subunit of Thermosynechococcus vestitus (strain NIES-2133 / IAM M-273 / BP-1).